Here is a 271-residue protein sequence, read N- to C-terminus: MPELPEVETTRRGIAPHIAGWRIVDVRVREARLRWPVPADLGETLTGRRLTDVRRRGKYLLLDFDEGTLIAHLGMSGSLRICKPGFPPRKHDHVDLVFEGDICLRYHDPRRFGCLLWTAEPPERHPLLAALGPEPLDKAFDGAHLHRLAAGRNTAVKSFIMDSRVVAGVGNIYANEALFRAGIHPARPAGKISLARYRNLGEHIAEVLAASIEQGGTTLRDFVNESGAPGYFKQVLRVYDRAGQPCRVCGEPIRCVRLGQRATYYCPRCQR.

P2 serves as the catalytic Schiff-base intermediate with DNA. E3 functions as the Proton donor in the catalytic mechanism. K58 functions as the Proton donor; for beta-elimination activity in the catalytic mechanism. DNA is bound by residues H91, R110, and R152. An FPG-type zinc finger spans residues 237-271; the sequence is RVYDRAGQPCRVCGEPIRCVRLGQRATYYCPRCQR. Catalysis depends on R261, which acts as the Proton donor; for delta-elimination activity.

The protein belongs to the FPG family. Monomer. Zn(2+) serves as cofactor.

The enzyme catalyses Hydrolysis of DNA containing ring-opened 7-methylguanine residues, releasing 2,6-diamino-4-hydroxy-5-(N-methyl)formamidopyrimidine.. It carries out the reaction 2'-deoxyribonucleotide-(2'-deoxyribose 5'-phosphate)-2'-deoxyribonucleotide-DNA = a 3'-end 2'-deoxyribonucleotide-(2,3-dehydro-2,3-deoxyribose 5'-phosphate)-DNA + a 5'-end 5'-phospho-2'-deoxyribonucleoside-DNA + H(+). In terms of biological role, involved in base excision repair of DNA damaged by oxidation or by mutagenic agents. Acts as a DNA glycosylase that recognizes and removes damaged bases. Has a preference for oxidized purines, such as 7,8-dihydro-8-oxoguanine (8-oxoG). Has AP (apurinic/apyrimidinic) lyase activity and introduces nicks in the DNA strand. Cleaves the DNA backbone by beta-delta elimination to generate a single-strand break at the site of the removed base with both 3'- and 5'-phosphates. The protein is Formamidopyrimidine-DNA glycosylase of Methylococcus capsulatus (strain ATCC 33009 / NCIMB 11132 / Bath).